The sequence spans 1084 residues: Myosin heavy chain, skeletal muscle (1084 aa).

Disordered stretches follow at residues 1–20, 270–292, and 298–317; these read SAET…KTKE, EIEA…SREL, and RLEE…KKRE. An alpha-helical tailpiece (S2) region spans residues 1–258; sequence SAETEKEMAN…SKIEDEQALM (258 aa). The interval 259-1084 is rodlike tail (S2 and LMM domains); it reads TNLQRIEELE…DVHSKVISEE (826 aa). Basic and acidic residues predominate over residues 273-292; sequence AERASRAKAEKQRSDLSREL. The stretch at 455–1084 forms a coiled coil; sequence QAFTQQIEGL…DVHSKVISEE (630 aa).

Muscle myosin is a hexameric protein that consists of 2 heavy chain subunits (MHC), 2 alkali light chain subunits (MLC) and 2 regulatory light chain subunits (MLC-2).

Its subcellular location is the cytoplasm. It is found in the myofibril. Functionally, muscle contraction. The sequence is that of Myosin heavy chain, skeletal muscle from Oryctolagus cuniculus (Rabbit).